The sequence spans 212 residues: Thymidylate kinase (212 aa).

ATP is bound at residue 10 to 17 (GLEGAGKT).

The protein belongs to the thymidylate kinase family.

The enzyme catalyses dTMP + ATP = dTDP + ADP. Phosphorylation of dTMP to form dTDP in both de novo and salvage pathways of dTTP synthesis. In Baumannia cicadellinicola subsp. Homalodisca coagulata, this protein is Thymidylate kinase.